The primary structure comprises 699 residues: Polyribonucleotide nucleotidyltransferase (699 aa).

Residues Asp-485 and Asp-491 each coordinate Mg(2+). Residues Pro-552–Ile-611 form the KH domain. Positions Gly-621–Lys-689 constitute an S1 motif domain.

It belongs to the polyribonucleotide nucleotidyltransferase family. As to quaternary structure, component of the RNA degradosome, which is a multiprotein complex involved in RNA processing and mRNA degradation. Mg(2+) is required as a cofactor.

Its subcellular location is the cytoplasm. The catalysed reaction is RNA(n+1) + phosphate = RNA(n) + a ribonucleoside 5'-diphosphate. Its function is as follows. Involved in mRNA degradation. Catalyzes the phosphorolysis of single-stranded polyribonucleotides processively in the 3'- to 5'-direction. The polypeptide is Polyribonucleotide nucleotidyltransferase (Shewanella sp. (strain MR-7)).